The primary structure comprises 387 residues: Succinate--CoA ligase [ADP-forming] subunit beta (387 aa).

In terms of domain architecture, ATP-grasp spans 9-244 (KEVLRKFGVA…LNEEEPSEIE (236 aa)). ATP is bound by residues lysine 46, 53–55 (GRG), glutamate 99, cysteine 102, and glutamate 107. Mg(2+) contacts are provided by asparagine 199 and aspartate 213. Substrate is bound by residues asparagine 264 and 321–323 (GIM).

This sequence belongs to the succinate/malate CoA ligase beta subunit family. As to quaternary structure, heterotetramer of two alpha and two beta subunits. Mg(2+) is required as a cofactor.

The enzyme catalyses succinate + ATP + CoA = succinyl-CoA + ADP + phosphate. It catalyses the reaction GTP + succinate + CoA = succinyl-CoA + GDP + phosphate. Its pathway is carbohydrate metabolism; tricarboxylic acid cycle; succinate from succinyl-CoA (ligase route): step 1/1. Its function is as follows. Succinyl-CoA synthetase functions in the citric acid cycle (TCA), coupling the hydrolysis of succinyl-CoA to the synthesis of either ATP or GTP and thus represents the only step of substrate-level phosphorylation in the TCA. The beta subunit provides nucleotide specificity of the enzyme and binds the substrate succinate, while the binding sites for coenzyme A and phosphate are found in the alpha subunit. This chain is Succinate--CoA ligase [ADP-forming] subunit beta, found in Bdellovibrio bacteriovorus (strain ATCC 15356 / DSM 50701 / NCIMB 9529 / HD100).